A 189-amino-acid chain; its full sequence is Putative manganese efflux pump MntP (189 aa).

The next 6 helical transmembrane spans lie at 3–23 (LSATLILAFGMSMDAFAASIG), 41–61 (LIFGVVEAITPIIGWGIGLFA), 65–85 (IMEWDHWVAFSLLFILGMRMI), 103–123 (GFWLLVATAIATSLDAMAIGV), 132–152 (IVHTAMAIGCATMIMATLGMM), and 167–187 (ILGGVVLIGIGVNILLEHLGY).

It belongs to the MntP (TC 9.B.29) family.

Its subcellular location is the cell inner membrane. In terms of biological role, probably functions as a manganese efflux pump. This Serratia proteamaculans (strain 568) protein is Putative manganese efflux pump MntP.